The chain runs to 160 residues: MKSLQKGFTLIELMIVVAIIGILAAIAIPQYQNYIARSQVSRVMSETGQMRTAIETCLLDGKKADECFIGWTKSNLLGASGSPSSSNDSTADHPGQGGLVIDYKLEADATNAITATFGQNAAATLHGKALKWTRDPKATWSCSTDVELKFRPTGCKDDLK.

A propeptide spans 1-7 (leader sequence); that stretch reads MKSLQKG. F8 carries the post-translational modification N-methylphenylalanine. A helical membrane pass occupies residues 8-28; it reads FTLIELMIVVAIIGILAAIAI.

This sequence belongs to the N-Me-Phe pilin family. As to quaternary structure, the pili are polar flexible filaments of about 5.4 nanometers diameter and 2.5 micrometers average length; they consist of only a single polypeptide chain arranged in a helical configuration of five subunits per turn in the assembled pilus.

The protein resides in the fimbrium. Its subcellular location is the membrane. Its function is as follows. Major component of the type IV fimbriae that plays an essential role in twitching motility, natural transformation, and protease secretion. In Dichelobacter nodosus (Bacteroides nodosus), this protein is Type IV major fimbrial protein FimA (fimA).